A 454-amino-acid chain; its full sequence is MRSCTVSTMPRMICRNADLEFDWLQPCFYPDEDDFYFSGPNSTPPGEDIWKKFELLPTPPLSPSCAFLELSTEPSDWASEMMLTEADLWGNPDEEDVFGPGGLGSLTPNPVILRDCMWSGFSAREKLERAMSEKMQHGHEPAATGPATQVPGAGAASTAGRGHSGTAGAALPAELAHPAAECVDPAVVFLLPVSKRNPVPVRVAPARAPARAPAVGAAVARAAAPASAAVAAPPGLSSRPPNGGDHKVLSTSGEDALSDEVDEEEDEEEEIDVVTVEKSCKTGGTTFTLTVSPKNTALGLRREQSRELILQRSVPIYQQHNYAAPSPYVENEDAPPQKKIKREVSPHPLKSVIHPKGKSFSPRKSDSEDSVRRRNHNILERQRRNDLRSSFTTLRDHVPELVKNEKAAKVVILKKACEYVHYLQAKEHQLLMEKEKLQARQQQLLKIIELAWTF.

3 disordered regions span residues 133–166, 231–270, and 326–374; these read EKMQHGHEPAATGPATQVPGAGAASTAGRGHSGT, AAPPGLSSRPPNGGDHKVLSTSGEDALSDEVDEEEDEEEE, and SPYV…VRRR. Over residues 256-270 the composition is skewed to acidic residues; it reads ALSDEVDEEEDEEEE. The span at 363–374 shows a compositional bias: basic and acidic residues; it reads RKSDSEDSVRRR. One can recognise a bHLH domain in the interval 371–423; that stretch reads VRRRNHNILERQRRNDLRSSFTTLRDHVPELVKNEKAAKVVILKKACEYVHYL. The segment at 423-444 is leucine-zipper; it reads LQAKEHQLLMEKEKLQARQQQL.

In terms of assembly, efficient DNA binding requires dimerization with another bHLH protein.

Its subcellular location is the nucleus. The chain is N-myc 2 proto-oncogene protein (N-MYC2) from Otospermophilus beecheyi (California ground squirrel).